Consider the following 901-residue polypeptide: Protein translocase subunit SecA (901 aa).

ATP contacts are provided by residues Gln-87, 105–109 (GEGKT), and Asp-512. Residues Cys-885, Cys-887, Cys-896, and His-897 each contribute to the Zn(2+) site.

Belongs to the SecA family. Monomer and homodimer. Part of the essential Sec protein translocation apparatus which comprises SecA, SecYEG and auxiliary proteins SecDF-YajC and YidC. Zn(2+) is required as a cofactor.

Its subcellular location is the cell inner membrane. It is found in the cytoplasm. It carries out the reaction ATP + H2O + cellular proteinSide 1 = ADP + phosphate + cellular proteinSide 2.. Part of the Sec protein translocase complex. Interacts with the SecYEG preprotein conducting channel. Has a central role in coupling the hydrolysis of ATP to the transfer of proteins into and across the cell membrane, serving both as a receptor for the preprotein-SecB complex and as an ATP-driven molecular motor driving the stepwise translocation of polypeptide chains across the membrane. The sequence is that of Protein translocase subunit SecA from Salmonella arizonae (strain ATCC BAA-731 / CDC346-86 / RSK2980).